The primary structure comprises 386 residues: Phosphoglycerate kinase (386 aa).

Substrate is bound by residues 21-23, arginine 36, 59-62, arginine 113, and arginine 146; these read DLN and HLGR. ATP contacts are provided by residues lysine 197, glutamate 313, and 339-342; that span reads GGDT.

It belongs to the phosphoglycerate kinase family. As to quaternary structure, monomer.

The protein resides in the cytoplasm. The catalysed reaction is (2R)-3-phosphoglycerate + ATP = (2R)-3-phospho-glyceroyl phosphate + ADP. Its pathway is carbohydrate degradation; glycolysis; pyruvate from D-glyceraldehyde 3-phosphate: step 2/5. The polypeptide is Phosphoglycerate kinase (Serratia proteamaculans (strain 568)).